The following is a 693-amino-acid chain: Elongation factor G (693 aa).

The tr-type G domain occupies Asn8–Leu283. GTP-binding positions include Ala17–Thr24, Asp81–His85, and Asn135–Asp138.

The protein belongs to the TRAFAC class translation factor GTPase superfamily. Classic translation factor GTPase family. EF-G/EF-2 subfamily.

It localises to the cytoplasm. Functionally, catalyzes the GTP-dependent ribosomal translocation step during translation elongation. During this step, the ribosome changes from the pre-translocational (PRE) to the post-translocational (POST) state as the newly formed A-site-bound peptidyl-tRNA and P-site-bound deacylated tRNA move to the P and E sites, respectively. Catalyzes the coordinated movement of the two tRNA molecules, the mRNA and conformational changes in the ribosome. In Acidobacterium capsulatum (strain ATCC 51196 / DSM 11244 / BCRC 80197 / JCM 7670 / NBRC 15755 / NCIMB 13165 / 161), this protein is Elongation factor G.